The sequence spans 469 residues: Protein RUFY3 (469 aa).

2 positions are modified to phosphothreonine: T5 and T12. Residues S34 and S49 each carry the phosphoserine modification. T51 carries the phosphothreonine modification. Residues 95 to 227 form the RUN domain; it reads DSDYAPLQQF…IDANFCMKGE (133 aa). 2 coiled-coil regions span residues 271 to 362 and 422 to 463; these read NRHL…VEKE and KSEL…AANK.

As to quaternary structure, interacts with PAK1. Interacts (via C-terminus) with Ras-related Rab-5 proteins. Interacts (via C-terminus) with Ras-related Rap-2 proteins. Interacts with PIK3CA and PIK3R1. Interacts (via N-terminus) with FSCN1; this interaction induces neuron axon development. Interacts with DBN1. Interacts (via the second coiled coil) with GTP-, but not GDP-bound ARL8A and ARL8B. Interacts with dynactin/DCTN1 and the dynein intermediate chain DYNC1I1/2. Directly interacts with DYNC1LI1. Phosphorylated by PAK1.

It localises to the cytoplasm. It is found in the endomembrane system. Its subcellular location is the cell projection. The protein localises to the invadopodium. The protein resides in the growth cone. It localises to the perikaryon. It is found in the filopodium. Its subcellular location is the lamellipodium. The protein localises to the lysosome. In terms of biological role, ARL8 effector that promotes the coupling of endolysosomes to dynein-dynactin for retrograde transport along microtubules. Acts by binding both GTP-bound ARL8 and dynein-dynactin. In nonneuronal cells, promotes concentration of endolysosomes in the juxtanuclear area. In hippocampal neurons, drives retrograde transport of endolysosomes from the axon to the soma. Plays a role in the generation of neuronal polarity formation and axon growth. Implicated in the formation of a single axon by developing neurons. May inhibit the formation of additional axons by inhibition of PI3K in minor neuronal processes. Plays a role in the formation of F-actin-enriched protrusive structures at the cell periphery. Plays a role in cytoskeletal organization by regulating the subcellular localization of FSCN1 and DBN1 at axonal growth cones. The chain is Protein RUFY3 from Pongo abelii (Sumatran orangutan).